A 228-amino-acid chain; its full sequence is Prolactin (228 aa).

The signal sequence occupies residues 1 to 29; the sequence is MCPKGSSVKGSLLLLLLMSSRFLFKAVES. A disulfide bond links Cys-33 and Cys-40. A phosphoserine mark is found at Ser-55, Ser-63, and Ser-119. 2 disulfide bridges follow: Cys-87/Cys-203 and Cys-220/Cys-228.

The protein belongs to the somatotropin/prolactin family. In terms of assembly, interacts with PRLR.

The protein resides in the secreted. Prolactin acts primarily on the mammary gland by promoting lactation. The chain is Prolactin (PRL) from Monodelphis domestica (Gray short-tailed opossum).